A 225-amino-acid polypeptide reads, in one-letter code: NAD(P)H-quinone oxidoreductase subunit K, chloroplastic (225 aa).

[4Fe-4S] cluster-binding residues include Cys43, Cys44, Cys108, and Cys139.

This sequence belongs to the complex I 20 kDa subunit family. As to quaternary structure, NDH is composed of at least 16 different subunits, 5 of which are encoded in the nucleus. [4Fe-4S] cluster serves as cofactor.

It is found in the plastid. The protein resides in the chloroplast thylakoid membrane. It catalyses the reaction a plastoquinone + NADH + (n+1) H(+)(in) = a plastoquinol + NAD(+) + n H(+)(out). The enzyme catalyses a plastoquinone + NADPH + (n+1) H(+)(in) = a plastoquinol + NADP(+) + n H(+)(out). In terms of biological role, NDH shuttles electrons from NAD(P)H:plastoquinone, via FMN and iron-sulfur (Fe-S) centers, to quinones in the photosynthetic chain and possibly in a chloroplast respiratory chain. The immediate electron acceptor for the enzyme in this species is believed to be plastoquinone. Couples the redox reaction to proton translocation, and thus conserves the redox energy in a proton gradient. In Lemna minor (Common duckweed), this protein is NAD(P)H-quinone oxidoreductase subunit K, chloroplastic.